Reading from the N-terminus, the 496-residue chain is Probable G-protein coupled receptor K01A12.3 (496 aa).

Over 1-19 the chain is Extracellular; the sequence is MESVTRHRADMISFFTFDS. Residues 20–40 traverse the membrane as a helical segment; that stretch reads YISIVGVAYTAVGLLGVFCNV. The Cytoplasmic segment spans residues 41 to 58; it reads TTVIMILTNRVFRLSAYT. The chain crosses the membrane as a helical span at residues 59–79; sequence IMANVALADSIVMLIAGVACG. The Extracellular segment spans residues 80–128; the sequence is MDVMWPNPNDLTSFIPSLEEPYQKIAPVSLRNDSKTDSSAAGFETGNIH. N111 carries an N-linked (GlcNAc...) asparagine glycan. The helical transmembrane segment at 129–149 threads the bilayer; sequence AVLSFSFVAAWTAGVISYAML. Over 150-169 the chain is Cytoplasmic; that stretch reads GTNRCIAICYYGTKARALNQ. The helical transmembrane segment at 170–190 threads the bilayer; the sequence is VSVAVACSASTWIVGIAAALV. Residues 191-216 are Extracellular-facing; sequence GTLSQPMIGIQRTMWSISFLEPRPHT. Residues 217–237 form a helical membrane-spanning segment; it reads TLFFTLLCAANLLGLGAQWVC. The Cytoplasmic segment spans residues 238–285; that stretch reads STLVLLKIRQVKKKISKNKLNQNSANRFRKQVILALNEIIVTGNFKAR. A helical transmembrane segment spans residues 286-306; that stretch reads LTFQFFYPSILCTISTFLFFI. Residues 307–318 are Extracellular-facing; sequence KPYAFEYLSGWQ. A helical transmembrane segment spans residues 319-339; the sequence is LVILHLLWLCNHTCNPFIYAY. Over 340 to 496 the chain is Cytoplasmic; the sequence is FNDRMRLTYK…WVKFAKKASI (157 aa). Positions 451–470 are disordered; the sequence is TKELESAHNQGGSSRFDSER.

It belongs to the G-protein coupled receptor 1 family.

The protein localises to the cell membrane. This chain is Probable G-protein coupled receptor K01A12.3, found in Caenorhabditis elegans.